We begin with the raw amino-acid sequence, 279 residues long: Proline-rich protein 23D1 (279 aa).

Disordered stretches follow at residues 1-60 (MYGY…PHLN) and 247-270 (LRPM…RPPS). Residues 15-33 (TEPQNDNEGETSLATTQMN) are compositionally biased toward polar residues.

This sequence belongs to the PRR23 family.

This chain is Proline-rich protein 23D1 (PRR23D1), found in Homo sapiens (Human).